A 128-amino-acid chain; its full sequence is Prokineticin-2 (128 aa).

A signal peptide spans 1–27; the sequence is MRSSRCARLLLLLLLPPLLLTPPAGDA. Intrachain disulfides connect C34-C46, C40-C58, C45-C106, C68-C114, and C108-C124. Positions 71 to 95 are disordered; sequence MTRKNHFGNGRQERRKRKRRRKKKV. Over residues 83–95 the composition is skewed to basic residues; it reads ERRKRKRRRKKKV.

The protein belongs to the AVIT (prokineticin) family.

Its subcellular location is the secreted. Functionally, may function as an output molecule from the suprachiasmatic nucleus (SCN) that transmits behavioral circadian rhythm. May also function locally within the SCN to synchronize output. Potently contracts gastrointestinal (GI) smooth muscle. The polypeptide is Prokineticin-2 (PROK2) (Bos taurus (Bovine)).